A 73-amino-acid chain; its full sequence is Large ribosomal subunit protein bL27c (73 aa).

It belongs to the bacterial ribosomal protein bL27 family.

It localises to the plastid. The protein resides in the chloroplast. This is Large ribosomal subunit protein bL27c (rpl27) from Chrysochromulina alifera (Plankton alga).